A 28-amino-acid polypeptide reads, in one-letter code: Ranatuerin-2B (28 aa).

A disulfide bond links Cys23 and Cys28.

As to expression, expressed by the skin glands.

It localises to the secreted. Its function is as follows. Antibacterial activity against Gram-positive bacterium S.aureus and Gram-negative bacterium E.coli. Has activity against C.albicans. The protein is Ranatuerin-2B of Lithobates berlandieri (Rio Grande leopard frog).